The sequence spans 930 residues: Isoleucine--tRNA ligase (930 aa).

The short motif at 57-67 (PYANGNIHVGH) is the 'HIGH' region element. Glu-554 serves as a coordination point for L-isoleucyl-5'-AMP. The short motif at 595 to 599 (KMSKS) is the 'KMSKS' region element. Position 598 (Lys-598) interacts with ATP. Zn(2+) is bound by residues Cys-888, Cys-891, Cys-908, and Cys-911.

This sequence belongs to the class-I aminoacyl-tRNA synthetase family. IleS type 1 subfamily. In terms of assembly, monomer. The cofactor is Zn(2+).

The protein resides in the cytoplasm. It carries out the reaction tRNA(Ile) + L-isoleucine + ATP = L-isoleucyl-tRNA(Ile) + AMP + diphosphate. Its function is as follows. Catalyzes the attachment of isoleucine to tRNA(Ile). As IleRS can inadvertently accommodate and process structurally similar amino acids such as valine, to avoid such errors it has two additional distinct tRNA(Ile)-dependent editing activities. One activity is designated as 'pretransfer' editing and involves the hydrolysis of activated Val-AMP. The other activity is designated 'posttransfer' editing and involves deacylation of mischarged Val-tRNA(Ile). This Streptococcus pneumoniae (strain ATCC BAA-255 / R6) protein is Isoleucine--tRNA ligase.